The chain runs to 392 residues: Anhydro-N-acetylmuramic acid kinase (392 aa).

22-29 (GTSMDGVD) is an ATP binding site.

The protein belongs to the anhydro-N-acetylmuramic acid kinase family.

The enzyme catalyses 1,6-anhydro-N-acetyl-beta-muramate + ATP + H2O = N-acetyl-D-muramate 6-phosphate + ADP + H(+). It functions in the pathway amino-sugar metabolism; 1,6-anhydro-N-acetylmuramate degradation. It participates in cell wall biogenesis; peptidoglycan recycling. Catalyzes the specific phosphorylation of 1,6-anhydro-N-acetylmuramic acid (anhMurNAc) with the simultaneous cleavage of the 1,6-anhydro ring, generating MurNAc-6-P. Is required for the utilization of anhMurNAc either imported from the medium or derived from its own cell wall murein, and thus plays a role in cell wall recycling. This is Anhydro-N-acetylmuramic acid kinase from Burkholderia pseudomallei (strain 1106a).